We begin with the raw amino-acid sequence, 254 residues long: Triosephosphate isomerase (254 aa).

Substrate is bound at residue 9–11 (NWK). The Electrophile role is filled by His96. Glu169 acts as the Proton acceptor in catalysis. Substrate contacts are provided by residues Gly175, Ser215, and 236 to 237 (GG).

This sequence belongs to the triosephosphate isomerase family. In terms of assembly, homodimer.

It is found in the cytoplasm. It catalyses the reaction D-glyceraldehyde 3-phosphate = dihydroxyacetone phosphate. It functions in the pathway carbohydrate biosynthesis; gluconeogenesis. The protein operates within carbohydrate degradation; glycolysis; D-glyceraldehyde 3-phosphate from glycerone phosphate: step 1/1. In terms of biological role, involved in the gluconeogenesis. Catalyzes stereospecifically the conversion of dihydroxyacetone phosphate (DHAP) to D-glyceraldehyde-3-phosphate (G3P). The sequence is that of Triosephosphate isomerase from Borrelia duttonii (strain Ly).